Here is a 2422-residue protein sequence, read N- to C-terminus: Interferon-induced very large GTPase 1 (2422 aa).

The tract at residues 945-965 (ENFFEDSDSPTKSSSTEPSPH) is disordered. Positions 954 to 963 (PTKSSSTEPS) are enriched in low complexity. In terms of domain architecture, VLIG-type G spans 1479 to 1720 (DKRLFVLSIL…KISDVKSRVQ (242 aa)). GTP-binding positions include 1489 to 1496 (GLQSSGKS), 1542 to 1545 (DTEG), and 1619 to 1622 (TATD).

Belongs to the TRAFAC class dynamin-like GTPase superfamily. Very large inducible GTPase (VLIG) family.

The protein resides in the cytoplasm. It is found in the cytosol. The protein localises to the nucleus. This Homo sapiens (Human) protein is Interferon-induced very large GTPase 1 (GVINP1).